The following is an 82-amino-acid chain: Acyl carrier protein (82 aa).

Positions 4–79 (PEMEERLRKI…DALNYLETHQ (76 aa)) constitute a Carrier domain. Residue Ser-39 is modified to O-(pantetheine 4'-phosphoryl)serine.

Belongs to the acyl carrier protein (ACP) family. In terms of processing, 4'-phosphopantetheine is transferred from CoA to a specific serine of apo-ACP by AcpS. This modification is essential for activity because fatty acids are bound in thioester linkage to the sulfhydryl of the prosthetic group.

Its subcellular location is the cytoplasm. It functions in the pathway lipid metabolism; fatty acid biosynthesis. Functionally, carrier of the growing fatty acid chain in fatty acid biosynthesis. This is Acyl carrier protein from Chloroflexus aurantiacus (strain ATCC 29366 / DSM 635 / J-10-fl).